We begin with the raw amino-acid sequence, 108 residues long: UPF0145 protein Fnod_0426 (108 aa).

It belongs to the UPF0145 family.

The sequence is that of UPF0145 protein Fnod_0426 from Fervidobacterium nodosum (strain ATCC 35602 / DSM 5306 / Rt17-B1).